The primary structure comprises 469 residues: Dihydrolipoyl dehydrogenase (469 aa).

FAD is bound by residues 40–48 (EKASLGGVC), Lys57, and Ala120. A disulfide bridge links Cys48 with Cys53. NAD(+) is bound by residues 186 to 190 (GGGAI), Glu209, and 275 to 278 (AVGV). Asp317 and Ala325 together coordinate FAD. His450 serves as the catalytic Proton acceptor.

Belongs to the class-I pyridine nucleotide-disulfide oxidoreductase family. As to quaternary structure, homodimer. It depends on FAD as a cofactor.

It is found in the cytoplasm. It carries out the reaction N(6)-[(R)-dihydrolipoyl]-L-lysyl-[protein] + NAD(+) = N(6)-[(R)-lipoyl]-L-lysyl-[protein] + NADH + H(+). Its function is as follows. Lipoamide dehydrogenase is a component of the alpha-ketoacid dehydrogenase complexes. This chain is Dihydrolipoyl dehydrogenase (lpd), found in Chlorobaculum parvum (strain DSM 263 / NCIMB 8327) (Chlorobium vibrioforme subsp. thiosulfatophilum).